The following is a 152-amino-acid chain: 3-dehydroquinate dehydratase (152 aa).

The Proton acceptor role is filled by Y23. The substrate site is built by N75, H81, and D88. The Proton donor role is filled by H101. Substrate contacts are provided by residues 102–103 (IS) and R112.

This sequence belongs to the type-II 3-dehydroquinase family. As to quaternary structure, homododecamer.

The catalysed reaction is 3-dehydroquinate = 3-dehydroshikimate + H2O. It participates in metabolic intermediate biosynthesis; chorismate biosynthesis; chorismate from D-erythrose 4-phosphate and phosphoenolpyruvate: step 3/7. Functionally, catalyzes a trans-dehydration via an enolate intermediate. The sequence is that of 3-dehydroquinate dehydratase from Alkalilimnicola ehrlichii (strain ATCC BAA-1101 / DSM 17681 / MLHE-1).